A 79-amino-acid chain; its full sequence is uncharacterized protein (79 aa).

The disordered stretch occupies residues 20-52 (TERGAGLSPAAPPDPSPAIAPTMAEGGVPSPGP).

This is an uncharacterized protein from Homo sapiens (Human).